The following is a 423-amino-acid chain: Histidine--tRNA ligase (423 aa).

Belongs to the class-II aminoacyl-tRNA synthetase family.

It is found in the cytoplasm. The catalysed reaction is tRNA(His) + L-histidine + ATP = L-histidyl-tRNA(His) + AMP + diphosphate + H(+). This chain is Histidine--tRNA ligase, found in Picrophilus torridus (strain ATCC 700027 / DSM 9790 / JCM 10055 / NBRC 100828 / KAW 2/3).